A 256-amino-acid polypeptide reads, in one-letter code: Large ribosomal subunit protein bL28m (256 aa).

A mitochondrion-targeting transit peptide spans 1-55 (MPLHKYPVWLWKRLQLREGICSRLPGHYLRSLEEERTPTPVHYRPHGAKFKINPK).

This sequence belongs to the bacterial ribosomal protein bL28 family. Component of the mitochondrial large ribosomal subunit (mt-LSU). Mature mammalian 55S mitochondrial ribosomes consist of a small (28S) and a large (39S) subunit. The 28S small subunit contains a 12S ribosomal RNA (12S mt-rRNA) and 30 different proteins. The 39S large subunit contains a 16S rRNA (16S mt-rRNA), a copy of mitochondrial valine transfer RNA (mt-tRNA(Val)), which plays an integral structural role, and 52 different proteins. Interacts with OXA1L. As to expression, found in a variety of normal tissues including spleen, testes, thymus, liver, kidney, brain, adrenal, lung and retinal tissue.

The protein localises to the mitochondrion. The polypeptide is Large ribosomal subunit protein bL28m (MRPL28) (Homo sapiens (Human)).